The primary structure comprises 664 residues: MAWQSSSKVPDGEFTAVVYRLIRDSRYSEAVQLLSAELQRSSRSRAGLSLLAYCYYRLQEFELAAECYEQLSQMHPELEQYRLYQAQALYKACLYPEATRVTFLLDNPAYQTRVLRLQAAIKYSEGDLPGARSLVEQLLSGEAGEDSGGENDPDGLVNMGCLLYKEGHYEAACSKFLAALQASGYQPDLSYNLALAYYSSRQYAPALKHIADIIERGIRQHPELGVGMTTEGIDVRSVGNTVVLHQTALIEAFNLKAAIEYQLRNFEVAQETLTDMPPRAEEELDPVTLHNQALMNMDAKPTEGFEKLQFLLQQNPFPPETFGNLLLLYCKYEYFDLAADVLAENAHLTYKFLTPYLYDFLDAMITCQTAPEEAFIKLDGLAGMLTEQLRRLTKQVQEARHNRDDEIIKKAMNEYDETLEKYIPVLMAQAKIYWNLENYPMVEKIFRKSVEFCNDHDVWKLNVAHVLFMQENKYKEAIGFYEPIVKKNYDNILSVSAIVLANLCVSYIMTSQNEEAEELMRKIEKEEEQLSYGDPDKKIYHLCIVNLVIGTLYCAKGNYDFGISRVIKSLEPYHKKLGTDTWYYAKRCFLSLLENMSKHMIVLCDGVVQECVQFLEYCELYGRNIPAVLEQPLEEERIHTGKNTVTYESRLLKALIYEVIGWNM.

7 TPR repeats span residues 11–44 (DGEF…SSRS), 45–78 (RAGL…HPEL), 153–186 (PDGL…SGYQ), 188–220 (DLSY…GIRQ), 393–423 (TKQV…EKYI), 424–456 (PVLM…CNDH), and 458–491 (VWKL…NYDN). Positions 507–534 (YIMTSQNEEAEELMRKIEKEEEQLSYGD) form a coiled coil. One copy of the TPR 8 repeat lies at 543–576 (CIVNLVIGTLYCAKGNYDFGISRVIKSLEPYHKK).

This sequence belongs to the TTC30/dfy-1/fleer family. In terms of assembly, interacts wit the IFT B complex component IFT52.

The protein localises to the cell projection. It is found in the cilium. In terms of biological role, required for polyglutamylation of axonemal tubulin. Plays a role in anterograde intraflagellar transport (IFT), the process by which cilia precursors are transported from the base of the cilium to the site of their incorporation at the tip. In Mus musculus (Mouse), this protein is Intraflagellar transport protein 70A1 (Ift70a1).